We begin with the raw amino-acid sequence, 406 residues long: Peptidase T (406 aa).

H78 serves as a coordination point for Zn(2+). The active site involves D80. D139 lines the Zn(2+) pocket. E173 acts as the Proton acceptor in catalysis. Zn(2+)-binding residues include E174, D196, and H378.

This sequence belongs to the peptidase M20B family. It depends on Zn(2+) as a cofactor.

It is found in the cytoplasm. It catalyses the reaction Release of the N-terminal residue from a tripeptide.. In terms of biological role, cleaves the N-terminal amino acid of tripeptides. This Clostridium perfringens (strain SM101 / Type A) protein is Peptidase T.